Reading from the N-terminus, the 855-residue chain is Circadian locomoter output cycles protein kaput (855 aa).

The short motif at 32–47 (DKAKRVSRNKSEKKRR) is the Nuclear localization signal element. In terms of domain architecture, bHLH spans 34-84 (AKRVSRNKSEKKRRDQFNVLIKELGSMLPGNARKMDKSTVLQKSIDFLRKH). Phosphoserine is present on residues S38 and S42. A Glycyl lysine isopeptide (Lys-Gly) (interchain with G-Cter in SUMO1) cross-link involves residue K67. PAS domains follow at residues 107-177 (NEEF…LLES) and 262-332 (FIKE…MQYG). The PAC domain occupies 336–379 (SCYYRFLTKGQQWIWLQTHYYITYHQWNSRPEFIVCTHTVVSYA). Positions 371 to 854 (CTHTVVSYAE…SLTDPSKVQP (484 aa)) are interaction with NR3C1. Disordered regions lie at residues 392–411 (EESL…SDNR) and 420–497 (ALER…LTQP). S408 is modified (phosphoserine). Residue S427 is modified to Phosphoserine; by GSK3-beta. S431 carries the phosphoserine modification. A compositionally biased stretch (polar residues) spans 447–463 (DPSSTPTKIPTDTSTPP). Positions 450–570 (STPTKIPTDT…QGLQMFLQQS (121 aa)) are interaction with SIRT1. T451 and T461 each carry phosphothreonine; by CDK5. The span at 478-493 (SSFSSQSINSQSVGPS) shows a compositional bias: low complexity. Residues 514–564 (FQFSAQLGAMQHLKDQLEQRTRMIEANIHRQQEELRKIQEQLQMVHGQGLQ) form an implicated in the circadian rhythmicity region. 3 disordered regions span residues 613-650 (TGQH…SQTP), 752-791 (QQQQ…GQPP), and 814-855 (AFPL…VQPQ). The span at 619–650 (QQQTLQSTSTQQSQQSVMSGHSQQTSLPSQTP) shows a compositional bias: low complexity. Residues 818–837 (QQSTFPPSHHQQHQPQQQQQ) show a composition bias toward low complexity. The span at 846–855 (LTDPSKVQPQ) shows a compositional bias: polar residues. Residue K851 forms a Glycyl lysine isopeptide (Lys-Gly) (interchain with G-Cter in SUMO1) linkage.

In terms of assembly, component of the circadian clock oscillator which includes the CRY proteins, CLOCK or NPAS2, BMAL1 or BMAL2, CSNK1D and/or CSNK1E, TIMELESS and the PER proteins. Forms a heterodimer with BMAL1. The CLOCK-BMAL1 heterodimer is required for E-box-dependent transactivation, for CLOCK nuclear translocation and degradation, and for phosphorylation of both CLOCK and BMAL1. Interacts with NR3C1 in a ligand-dependent fashion. Interacts with ESR1 and estrogen stimulates this interaction. Interacts with the complex p35/CDK5. Interacts with RELA/p65. Interacts with KAT2B, CREBBP and EP300. Interacts with ID1 and ID3. Interacts with ID2. Interacts with MTA1. Interacts with OGA. Interacts with SIRT1. Interacts with CIPC. Interacts with EZH2. Interacts with EIF4E, PIWIL1 and DDX4. Interacts with PER1, PER2, CRY1 and CRY2 and this interaction requires a translocation to the nucleus. Interaction of the CLOCK-BMAL1 heterodimer with PER or CRY inhibits transcription activation. Interaction of the CLOCK-BMAL1 with CRY1 is independent of DNA but with PER2 is off DNA. The CLOCK-BMAL1 heterodimer interacts with GSK3B. Interacts with KDM5A. Interacts with KMT2A; in a circadian manner. Interacts with MYBBP1A. Interacts with THRAP3. Interacts with MED1; this interaction requires the presence of THRAP3. Interacts with NCOA2. The CLOCK-BMAL1 heterodimer interacts with PASD1. Interacts with NDUFA9. Interacts with IMPDH2; in a circadian manner. Interacts with ASS1; in a circadian manner. Interacts with PIWIL2 (via PIWI domain). Interacts with HNF4A. Ubiquitinated, leading to its proteasomal degradation. In terms of processing, O-glycosylated; contains O-GlcNAc. O-glycosylation by OGT prevents protein degradation by inhibiting ubiquitination. It also stabilizes the CLOCK-BMAL1 heterodimer thereby increasing CLOCK-BMAL1-mediated transcriptional activation of PER1/2/3 and CRY1/2. Post-translationally, phosphorylation is dependent on the CLOCK-BMAL1 heterodimer formation. Phosphorylation enhances the transcriptional activity, alters the subcellular localization and decreases the stability of the heterodimer by promoting its degradation. Phosphorylation shows circadian variations in the liver: the hyperphosphorylated form peaks at midnight (CT18), while the hypophosphorylated form is abundant throughout the day. May be phosphorylated by CSNK1D and CKSN1E. Sumoylation enhances its transcriptional activity and interaction with ESR1, resulting in up-regulation of ESR1 activity. Estrogen stimulates sumoylation. Desumoylation by SENP1 negatively regulates its transcriptional activity. In terms of processing, undergoes lysosome-mediated degradation in a time-dependent manner in the liver. As to expression, expressed equally in brain, eye, testes, ovaries, liver, heart, lung, kidney. In the brain, expression is abundant in the suprachiasmatic nuclei (SCN), in the pyriform cortex, and in the hippocampus. Low expression throughout the rest of the brain. Expression does not appear to undergo circadian oscillations.

The protein localises to the nucleus. The protein resides in the cytoplasm. Its subcellular location is the cytosol. The enzyme catalyses L-lysyl-[protein] + acetyl-CoA = N(6)-acetyl-L-lysyl-[protein] + CoA + H(+). Transcriptional activator which forms a core component of the circadian clock. The circadian clock, an internal time-keeping system, regulates various physiological processes through the generation of approximately 24 hour circadian rhythms in gene expression, which are translated into rhythms in metabolism and behavior. It is derived from the Latin roots 'circa' (about) and 'diem' (day) and acts as an important regulator of a wide array of physiological functions including metabolism, sleep, body temperature, blood pressure, endocrine, immune, cardiovascular, and renal function. Consists of two major components: the central clock, residing in the suprachiasmatic nucleus (SCN) of the brain, and the peripheral clocks that are present in nearly every tissue and organ system. Both the central and peripheral clocks can be reset by environmental cues, also known as Zeitgebers (German for 'timegivers'). The predominant Zeitgeber for the central clock is light, which is sensed by retina and signals directly to the SCN. The central clock entrains the peripheral clocks through neuronal and hormonal signals, body temperature and feeding-related cues, aligning all clocks with the external light/dark cycle. Circadian rhythms allow an organism to achieve temporal homeostasis with its environment at the molecular level by regulating gene expression to create a peak of protein expression once every 24 hours to control when a particular physiological process is most active with respect to the solar day. Transcription and translation of core clock components (CLOCK, NPAS2, BMAL1, BMAL2, PER1, PER2, PER3, CRY1 and CRY2) plays a critical role in rhythm generation, whereas delays imposed by post-translational modifications (PTMs) are important for determining the period (tau) of the rhythms (tau refers to the period of a rhythm and is the length, in time, of one complete cycle). A diurnal rhythm is synchronized with the day/night cycle, while the ultradian and infradian rhythms have a period shorter and longer than 24 hours, respectively. Disruptions in the circadian rhythms contribute to the pathology of cardiovascular diseases, cancer, metabolic syndromes and aging. A transcription/translation feedback loop (TTFL) forms the core of the molecular circadian clock mechanism. Transcription factors, CLOCK or NPAS2 and BMAL1 or BMAL2, form the positive limb of the feedback loop, act in the form of a heterodimer and activate the transcription of core clock genes and clock-controlled genes (involved in key metabolic processes), harboring E-box elements (5'-CACGTG-3') within their promoters. The core clock genes: PER1/2/3 and CRY1/2 which are transcriptional repressors form the negative limb of the feedback loop and interact with the CLOCK|NPAS2-BMAL1|BMAL2 heterodimer inhibiting its activity and thereby negatively regulating their own expression. This heterodimer also activates nuclear receptors NR1D1/2 and RORA/B/G, which form a second feedback loop and which activate and repress BMAL1 transcription, respectively. Regulates the circadian expression of ICAM1, VCAM1, CCL2, THPO and MPL and also acts as an enhancer of the transactivation potential of NF-kappaB. Plays an important role in the homeostatic regulation of sleep. The CLOCK-BMAL1 heterodimer regulates the circadian expression of SERPINE1/PAI1, VWF, B3, CCRN4L/NOC, NAMPT, DBP, MYOD1, PPARGC1A, PPARGC1B, SIRT1, GYS2, F7, NGFR, GNRHR, BHLHE40/DEC1, ATF4, MTA1, KLF10 and also genes implicated in glucose and lipid metabolism. Promotes rhythmic chromatin opening, regulating the DNA accessibility of other transcription factors. May play a role in spermatogenesis; contributes to the chromatoid body assembly and physiology. The CLOCK-BMAL2 heterodimer activates the transcription of SERPINE1/PAI1 and BHLHE40/DEC1. The preferred binding motif for the CLOCK-BMAL1 heterodimer is 5'-CACGTGA-3', which contains a flanking adenine nucleotide at the 3-prime end of the canonical 6-nucleotide E-box sequence. CLOCK specifically binds to the half-site 5'-CAC-3', while BMAL1 binds to the half-site 5'-GTGA-3'. The CLOCK-BMAL1 heterodimer also recognizes the non-canonical E-box motifs 5'-AACGTGA-3' and 5'-CATGTGA-3'. CLOCK has an intrinsic acetyltransferase activity, which enables circadian chromatin remodeling by acetylating histones and nonhistone proteins, including its own partner BMAL1. Represses glucocorticoid receptor NR3C1/GR-induced transcriptional activity by reducing the association of NR3C1/GR to glucocorticoid response elements (GREs) via the acetylation of multiple lysine residues located in its hinge region. The acetyltransferase activity of CLOCK is as important as its transcription activity in circadian control. Acetylates metabolic enzymes IMPDH2 and NDUFA9 in a circadian manner. Facilitated by BMAL1, rhythmically interacts and acetylates argininosuccinate synthase 1 (ASS1) leading to enzymatic inhibition of ASS1 as well as the circadian oscillation of arginine biosynthesis and subsequent ureagenesis. Drives the circadian rhythm of blood pressure through transcriptional activation of ATP1B1. The chain is Circadian locomoter output cycles protein kaput (Clock) from Mus musculus (Mouse).